A 366-amino-acid chain; its full sequence is Chorismate synthase (366 aa).

NADP(+) contacts are provided by R48 and R54. FMN contacts are provided by residues R125–S127, N238–A239, G278, K293–S297, and R319.

The protein belongs to the chorismate synthase family. As to quaternary structure, homotetramer. The cofactor is FMNH2.

It carries out the reaction 5-O-(1-carboxyvinyl)-3-phosphoshikimate = chorismate + phosphate. It functions in the pathway metabolic intermediate biosynthesis; chorismate biosynthesis; chorismate from D-erythrose 4-phosphate and phosphoenolpyruvate: step 7/7. Catalyzes the anti-1,4-elimination of the C-3 phosphate and the C-6 proR hydrogen from 5-enolpyruvylshikimate-3-phosphate (EPSP) to yield chorismate, which is the branch point compound that serves as the starting substrate for the three terminal pathways of aromatic amino acid biosynthesis. This reaction introduces a second double bond into the aromatic ring system. In Neisseria meningitidis serogroup C / serotype 2a (strain ATCC 700532 / DSM 15464 / FAM18), this protein is Chorismate synthase.